The following is an 80-amino-acid chain: Protein UL148B (80 aa).

A helical transmembrane segment spans residues 10-30 (AICVGLVMGVTVIASCALLVF).

The protein localises to the host membrane. The sequence is that of Protein UL148B (UL148B) from Homo sapiens (Human).